A 271-amino-acid polypeptide reads, in one-letter code: Mannosyl-3-phosphoglycerate phosphatase (271 aa).

The Nucleophile role is filled by aspartate 13. Residues aspartate 13, aspartate 15, and aspartate 214 each contribute to the Mg(2+) site.

This sequence belongs to the HAD-like hydrolase superfamily. MPGP family. Mg(2+) is required as a cofactor.

It localises to the cytoplasm. It catalyses the reaction 2-O-(alpha-D-mannosyl)-3-phosphoglycerate + H2O = (2R)-2-O-(alpha-D-mannosyl)-glycerate + phosphate. The protein is Mannosyl-3-phosphoglycerate phosphatase (yedP) of Shigella dysenteriae serotype 1 (strain Sd197).